The chain runs to 231 residues: Ribose-5-phosphate isomerase A (231 aa).

Substrate contacts are provided by residues 28 to 31 (TGST), 83 to 86 (DGAD), and 96 to 99 (KGGG). Glutamate 105 serves as the catalytic Proton acceptor. Substrate is bound at residue lysine 123.

Belongs to the ribose 5-phosphate isomerase family. In terms of assembly, homodimer.

It carries out the reaction aldehydo-D-ribose 5-phosphate = D-ribulose 5-phosphate. The protein operates within carbohydrate degradation; pentose phosphate pathway; D-ribose 5-phosphate from D-ribulose 5-phosphate (non-oxidative stage): step 1/1. In terms of biological role, catalyzes the reversible conversion of ribose-5-phosphate to ribulose 5-phosphate. This chain is Ribose-5-phosphate isomerase A, found in Sinorhizobium fredii (strain NBRC 101917 / NGR234).